Reading from the N-terminus, the 1348-residue chain is MSPLETNPLSPETAMREPAETSTTEEQASTPHAADEKKILSDLSAPSSTTATPADKEHRPKSSSSNNAVSVNEVDALIAHLPEDERQVLKTQLEEIKVNISFFGLWRYATKMDILIMVISTICAIAAGAALPLFTILFGSLASTFQRIMLYQISYDEFYDELTKNVLYFVYLGIGEFVTVYVSTVGFIYTGEHATQKIREYYLESILRQNIGYFDKLGAGEVTTRITADTNLIQDGISEKVGLTLTALATFVTAFIIAYVKYWKLALICSSTIVALVLTMGGGSQFIIKYSKKSLDSYGAGGTVAEEVISSIRNATAFGTQDKLAKQYEVHLDEAEKWGTKNQIVMGFMIGAMFGLMYSNYGLGFWMGSRFLVDGAVDVGDILTVLMAILIGSFSLGNVSPNAQAFTNAVAAAAKIFGTIDRQSPLDPYSNEGKTLDHFEGHIELRNVKHIYPSRPEVTVMEDVSLSMPAGKTTALVGPSGSGKSTVVGLVERFYMPVRGTVLLDGHDIKDLNLRWLRQQISLVSQEPVLFGTTIYKNIRHGLIGTKYENESEDKVRELIENAAKMANAHDFITALPEGYETNVGQRGFLLSGGQKQRIAIARAVVSDPKILLLDEATSALDTKSEGVVQAALERAAEGRTTIVIAHRLSTIKTAHNIVVLVNGKIAEQGTHDELVDRGGAYRKLVEAQRINEQKEADALEDADAEDLTNADIAKIKTASSASSDLDGKPTTIDRTGTHKSVSSAILSKRPPETTPKYSLWTLLKFVASFNRPEIPYMLIGLVFSVLAGGGQPTQAVLYAKAISTLSLPESQYSKLRHDADFWSLMFFVVGIIQFITQSTNGAAFAVCSERLIRRARSTAFRTILRQDIAFFDKEENSTGALTSFLSTETKHLSGVSGVTLGTILMTSTTLGAAIIIALAIGWKLALVCISVVPVLLACGFYRFYMLAQFQSRSKLAYEGSANFACEATSSIRTVASLTRERDVWEIYHAQLDAQGRTSLISVLRSSLLYASSQALVFFCVALGFWYGGTLLGHHEYDIFRFFVCFSEILFGAQSAGTVFSFAPDMGKAKNAAAEFRRLFDRKPQIDNWSEEGEKLETVEGEIEFRNVHFRYPTRPEQPVLRGLDLTVKPGQYVALVGPSGCGKSTTIALLERFYDAIAGSILVDGKDISKLNINSYRSFLSLVSQEPTLYQGTIKENILLGIVEDDVPEEFLIKACKDANIYDFIMSLPEGFNTVVGSKGGMLSGGQKQRVAIARALLRDPKILLLDEATSALDSESEKVVQAALDAAARGRTTIAVAHRLSTIQKADVIYVFDQGKIVESGTHSELVQKKGRYYELVNLQSLGKGH.

The segment covering 1–10 has biased composition (polar residues); that stretch reads MSPLETNPLS. Residues 1 to 67 form a disordered region; it reads MSPLETNPLS…HRPKSSSSNN (67 aa). The span at 20-31 shows a compositional bias: low complexity; the sequence is ETSTTEEQASTP. Asn-99 is a glycosylation site (N-linked (GlcNAc...) asparagine). Helical transmembrane passes span 114-134, 168-188, 240-260, and 268-288; these read ILIMVISTICAIAAGAALPLF, YFVYLGIGEFVTVYVSTVGFI, KVGLTLTALATFVTAFIIAYV, and ICSSTIVALVLTMGGGSQFII. One can recognise an ABC transmembrane type-1 1 domain in the interval 118 to 408; it reads VISTICAIAA…VSPNAQAFTN (291 aa). N-linked (GlcNAc...) asparagine glycosylation is present at Asn-314. 2 helical membrane passes run 344 to 364 and 371 to 391; these read IVMGFMIGAMFGLMYSNYGLG and FLVDGAVDVGDILTVLMAILI. The region spanning 443–688 is the ABC transporter 1 domain; the sequence is IELRNVKHIY…GGAYRKLVEA (246 aa). Residue 478–485 coordinates ATP; sequence GPSGSGKS. Residue Asn-550 is glycosylated (N-linked (GlcNAc...) asparagine). 2 consecutive transmembrane segments (helical) span residues 778 to 798 and 825 to 845; these read MLIGLVFSVLAGGGQPTQAVL and LMFFVVGIIQFITQSTNGAAF. The ABC transmembrane type-1 2 domain occupies 779-1068; sequence LIGLVFSVLA…VFSFAPDMGK (290 aa). The N-linked (GlcNAc...) asparagine glycan is linked to Asn-877. The next 4 helical transmembrane spans lie at 892-912, 925-947, 1015-1035, and 1042-1062; these read HLSGVSGVTLGTILMTSTTLG, LALVCISVVPVLLACGFYRFYML, ALVFFCVALGFWYGGTLLGHH, and FFVCFSEILFGAQSAGTVFSF. N-linked (GlcNAc...) asparagine glycosylation is present at Asn-1088. In terms of domain architecture, ABC transporter 2 spans 1103-1341; the sequence is IEFRNVHFRY…KGRYYELVNL (239 aa). 1138 to 1145 serves as a coordination point for ATP; sequence GPSGCGKS.

It belongs to the ABC transporter superfamily. ABCB family. Multidrug resistance exporter (TC 3.A.1.201) subfamily.

The protein localises to the cell membrane. Fenamirol efflux transporter activity is inhibited by the cyclosporin derivative PSC 833, nigericin, reserpine and valinomycin. The effect of reserpine is transiant, while that of the cyclosporin derivative PSC 833, nigericin and valinomycin is proportional to the time of exposure. Cyclohexinmide has inhibitory effect only when applied prior to addition of the fungicide. Its function is as follows. Pleiotropic ABC efflux transporter involved in the protection of the cells against a wide range of toxic compounds. Confers resistance to the azole fenarimol via efflux transport. May also be involved in the secretion of penicillin. The polypeptide is ABC multidrug transporter atrD (Emericella nidulans (Aspergillus nidulans)).